The primary structure comprises 820 residues: G-type lectin S-receptor-like serine/threonine-protein kinase At1g11280 (820 aa).

An N-terminal signal peptide occupies residues 1-28 (MGIHLGEIGIVLFPWFLWLSLFLSCGYA). The Bulb-type lectin domain maps to 29-148 (AITISSPLTL…VSENLLWQSF (120 aa)). Residues 29–434 (AITISSPLTL…SELAGSRRTK (406 aa)) lie on the Extracellular side of the membrane. N-linked (GlcNAc...) asparagine glycosylation is found at Asn-57, Asn-92, Asn-98, Asn-241, and Asn-272. Residues 283 to 319 (PANLCDLYGACGPFGLCVTSNPTKCKCMKGFVPKYKE) enclose the EGF-like domain. Intrachain disulfides connect Cys-287-Cys-299 and Cys-293-Cys-307. 3 N-linked (GlcNAc...) asparagine glycosylation sites follow: Asn-325, Asn-341, and Asn-384. The 85-residue stretch at 338–422 (CQANLSTKTQ…VGGEFLSIRL (85 aa)) folds into the PAN domain. 2 disulfide bridges follow: Cys-377–Cys-398 and Cys-381–Cys-387. The helical transmembrane segment at 435-455 (IIVGSISLSIFVILAFGSYKY) threads the bilayer. Over 456-820 (WRYRAKQNVG…HVTQTEIYGR (365 aa)) the chain is Cytoplasmic. Residues 505–792 (FNVSNKLGQG…DLPRPKQPLF (288 aa)) form the Protein kinase domain. ATP-binding positions include 511 to 519 (LGQGGFGPV) and Lys-533. A phosphoserine mark is found at Ser-539 and Ser-554. Positions 594-611 (TLKLQIDWPKRFNIIQGV) are caM-binding. Catalysis depends on Asp-630, which acts as the Proton acceptor. 2 positions are modified to phosphoserine: Ser-634 and Ser-647. Phosphothreonine is present on Thr-664. Phosphoserine is present on residues Ser-707, Ser-708, and Ser-808. Phosphothreonine is present on Thr-815.

Belongs to the protein kinase superfamily. Ser/Thr protein kinase family.

It is found in the cell membrane. It catalyses the reaction L-seryl-[protein] + ATP = O-phospho-L-seryl-[protein] + ADP + H(+). It carries out the reaction L-threonyl-[protein] + ATP = O-phospho-L-threonyl-[protein] + ADP + H(+). This is G-type lectin S-receptor-like serine/threonine-protein kinase At1g11280 from Arabidopsis thaliana (Mouse-ear cress).